The sequence spans 91 residues: Na(+)/H(+) antiporter subunit F (91 aa).

3 helical membrane-spanning segments follow: residues 5–27 (ILMIVLVVMSISLFVCFIRTLIG), 34–53 (IVALDTFGINLIGFIGVIMM), and 63–82 (VVLVISILAFIGSIALSKFI).

This sequence belongs to the CPA3 antiporters (TC 2.A.63) subunit F family. Forms a heterooligomeric complex that consists of seven subunits: MrpA, MrpB, MrpC, MrpD, MrpE, MrpF and MrpG.

The protein resides in the cell membrane. In terms of biological role, mnh complex is a Na(+)Li(+)/H(+) antiporter involved in Na(+) and/or Li(+) excretion and Na(+) resistance. Na(+)/H(+) antiport consumes a transmembrane electrical potential, and is thus inferred to be electrogenic. Does not transport K(+), Ca(2+) or Mg(2+). The chain is Na(+)/H(+) antiporter subunit F (mrpF) from Alkalihalophilus pseudofirmus (strain ATCC BAA-2126 / JCM 17055 / OF4) (Bacillus pseudofirmus).